The following is a 1050-amino-acid chain: TSC22 domain family protein 1 (1050 aa).

The segment at 1–99 (MHQPPESTAA…SQAQLQGQPL (99 aa)) is required for interaction with TGFBR1 and promotion of TGF-beta signaling. 8 disordered regions span residues 22–111 (MAHP…KKSG), 126–285 (ISSN…VSSA), 445–479 (QTPT…SVGS), 511–531 (DFSS…VQLQ), 581–609 (LAQP…QLQY), 720–740 (VQPP…PPSS), 795–847 (QLPT…GSLV), and 879–919 (SLAQ…VSDG). Over residues 38–55 (ASALSAAGTGVSGAAPSS) the composition is skewed to low complexity. A compositionally biased stretch (pro residues) spans 58–71 (FPPPSSLLQPPPPA). Residues 85 to 97 (SLNLLSQAQLQGQ) are compositionally biased toward low complexity. The span at 134 to 143 (EDTESYDDLD) shows a compositional bias: acidic residues. A compositionally biased stretch (basic residues) spans 217–241 (HPHHLHHHHHIHHGHHLHHGHHHSS). A Phosphoserine modification is found at Ser265. Residues 458–476 (TSGSSVSSSVSTLSHYTES) are compositionally biased toward low complexity. Pro residues predominate over residues 586–603 (LPYPQPAPPVQTPLPGAP). The segment covering 906 to 919 (LSGDSGGVSAVSDG) has biased composition (low complexity). Residues 983-1004 (LKEQIKELIEKNSQLEQENNLL) form a leucine-zipper region. Residues 1015 to 1050 (QFQAQLQTGSPPATTQPQGTTQPPAQPASQGSGSTA) are disordered. Residues 1021 to 1050 (QTGSPPATTQPQGTTQPPAQPASQGSGSTA) are compositionally biased toward low complexity.

The protein belongs to the TSC-22/Dip/Bun family. Forms homodimers. Forms heterodimers. Component of a complex composed of TSC22D1 (via N-terminus), TGFBR1 and TGFBR2; the interaction between TSC22D1 and TGFBR1 is inhibited by SMAD7 and promoted by TGFB1. Interacts with SMAD7; the interaction requires TGF-beta and the interaction is inhibited by TGFBR1. Interacts with TPT1/fortilin; interaction results in the destabilization of TSC22D1 protein and prevents TSC22D1-mediated apoptosis. Interacts with SMAD4 (via N-terminus). Interacts with ACVRL1/ALK1, ACVR1/ALK2, BMPR1A/ALK3, ACVR1B/ALK4, BMPR1B/ALK6, ACVR2A/ACTRII, and BMPR2. Interacts with SMAD6. Interacts with TFE3; the interaction is enhanced in the presence of TGF-beta. In terms of assembly, forms a heterodimer with TSC22D4/THG1. As to quaternary structure, forms a heterodimer with TSC22D4/THG1. Interacts with histone H1-2. Interacts with GNL3. Ubiquitously expressed, abundantly expressed in testis, ovary, uterus, and lung. Expressed in cardiomyocytes.

Its subcellular location is the cytoplasm. It is found in the nucleus. The protein resides in the cell membrane. The protein localises to the mitochondrion. In terms of biological role, transcriptional repressor. Acts on the C-type natriuretic peptide (CNP) promoter. Acts to promote CASP3-mediated apoptosis. Positively regulates TGF-beta signaling by interacting with SMAD7 which inhibits binding of SMAD7 to TGFBR1, preventing recruitment of SMURF ubiquitin ligases to TGFBR1 and inhibiting SMURF-mediated ubiquitination and degradation of TGFBR1. Contributes to enhancement of TGF-beta signaling by binding to and modulating the transcription activator activity of SMAD4. Promotes TGF-beta-induced transcription of COL1A2; via its interaction with TFE3 at E-boxes in the gene proximal promoter. Plays a role in the repression of hematopoietic precursor cell growth. Promotes IL2 deprivation-induced apoptosis in T-lymphocytes, via repression of TSC22D3/GILZ transcription and activation of the caspase cascade. May act to negatively regulate TGFB3 signaling and thereby inhibit cell death in mammary gland cells. Functionally, positively regulates cell death in response to TGFB3 during mammary gland involution. This Rattus norvegicus (Rat) protein is TSC22 domain family protein 1.